Here is a 380-residue protein sequence, read N- to C-terminus: MKEYVLLLFLALCSAKPFFSPSHIALKNMMLKDMEDTDDDDDDDDDDDDDDEDNSLFPTREPRSHFFPFDLFPMCPFGCQCYSRVVHCSDLGLTSVPTNIPFDTRMLDLQNNKIKEIKENDFKGLTSLYGLILNNNKLTKIHPKAFLTTKKLRRLYLSHNQLSEIPLNLPKSLAELRIHENKVKKIQKDTFKGMNALHVLEMSANPLDNNGIEPGAFEGVTVFHIRIAEAKLTSVPKGLPPTLLELHLDYNKISTVELEDFKRYKELQRLGLGNNKITDIENGSLANIPRVREIHLENNKLKKIPSGLPELKYLQIIFLHSNSIARVGVNDFCPTVPKMKKSLYSAISLFNNPVKYWEMQPATFRCVLSRMSVQLGNFGM.

Residues 1-14 (MKEYVLLLFLALCS) form the signal peptide. Positions 15–32 (AKPFFSPSHIALKNMMLK) are excised as a propeptide. Positions 35 to 54 (EDTDDDDDDDDDDDDDDEDN) are enriched in acidic residues. Residues 35 to 59 (EDTDDDDDDDDDDDDDDEDNSLFPT) form a disordered region. An O-linked (GalNAc...) serine glycan is attached at Ser-55. Residues 66–102 (FFPFDLFPMCPFGCQCYSRVVHCSDLGLTSVPTNIPF) form the LRRNT domain. Intrachain disulfides connect Cys-75-Cys-81 and Cys-79-Cys-88. 11 LRR repeats span residues 103–124 (DTRMLDLQNNKIKEIKENDFKG), 127–148 (SLYGLILNNNKLTKIHPKAFLT), 151–173 (KLRRLYLSHNQLSEIPLNLPKSL), 174–193 (AELRIHENKVKKIQKDTFKG), 196–219 (ALHVLEMSANPLDNNGIEPGAFEG), 242–263 (TLLELHLDYNKISTVELEDFKR), 266–287 (ELQRLGLGNNKITDIENGSLAN), 290–312 (RVREIHLENNKLKKIPSGLPELK), 313–334 (YLQIIFLHSNSIARVGVNDFCP), 335–357 (TVPKMKKSLYSAISLFNNPVKYW), and 358–380 (EMQPATFRCVLSRMSVQLGNFGM). The tract at residues 166-212 (PLNLPKSLAELRIHENKVKKIQKDTFKGMNALHVLEMSANPLDNNGI) is interaction with TGFB1. Asn-282 carries N-linked (GlcNAc...) asparagine glycosylation. Residues Cys-333 and Cys-366 are joined by a disulfide bond.

The protein belongs to the small leucine-rich proteoglycan (SLRP) family. SLRP class I subfamily. In terms of assembly, interacts with TGFB1, TGFB2 and TGFB3. DCN, BGN, and FMOD inhibit binding to TGFB1. Interacts with BMP2. Interacts in vitro with type II collagen. Interacts with type I collagen. DCN can inhibit collagen binding. Post-translationally, there is no serine/glycine dipeptide sequence expected for the attachment of O-linked glycosaminoglycans and this is probably not a proteoglycan. The O-linked polysaccharide on 54-Ser is probably the mucin type linked to GalNAc. In terms of processing, the N-linked glycan at Asn-282 is composed of variable structures of GlcNAc, mannose, fucose, HexNAc and hexose. As to expression, higher levels in osteoarthritic articular cartilage, aorta, uterus. Moderate expression in small intestine, heart, liver, bladder, ovary, stomach, and in the adrenal, thyroid, and mammary glands. Low expression in trachea, bone marrow, and lung. Colocalizes with TGFB1 in chondrocytes within osteoarthritic (OA) lesions of articular cartilage.

The protein localises to the secreted. The protein resides in the extracellular space. It is found in the extracellular matrix. In terms of biological role, negatively regulates periodontal ligament (PDL) differentiation and mineralization to ensure that the PDL is not ossified and to maintain homeostasis of the tooth-supporting system. Inhibits BMP2-induced cytodifferentiation of PDL cells by preventing its binding to BMPR1B/BMP type-1B receptor, resulting in inhibition of BMP-dependent activation of SMAD proteins. Critical regulator of TGF-beta in articular cartilage and plays an essential role in cartilage homeostasis and osteoarthritis (OA) pathogenesis. Negatively regulates chondrogenesis in the articular cartilage by blocking the TGF-beta/receptor interaction on the cell surface and inhibiting the canonical TGF-beta/Smad signal. Binds calcium and plays a role in osteoblast-driven collagen biomineralization activity. The sequence is that of Asporin (ASPN) from Homo sapiens (Human).